Here is a 173-residue protein sequence, read N- to C-terminus: Small ribosomal subunit protein uS4c (173 aa).

Positions 94–155 (SRLDSKIYRS…TKLTSELIEK (62 aa)) constitute an S4 RNA-binding domain.

It belongs to the universal ribosomal protein uS4 family. Part of the 30S ribosomal subunit. Contacts protein S5. The interaction surface between S4 and S5 is involved in control of translational fidelity.

The protein localises to the plastid. Its function is as follows. One of the primary rRNA binding proteins, it binds directly to 16S rRNA where it nucleates assembly of the body of the 30S subunit. Functionally, with S5 and S12 plays an important role in translational accuracy. This is Small ribosomal subunit protein uS4c (rps4) from Helicosporidium sp. subsp. Simulium jonesii (Green alga).